Reading from the N-terminus, the 993-residue chain is uncharacterized protein (993 aa).

Residues 1–24 (MLLFKFNFTTAFLFTILAFAQARS) form the signal peptide. N-linked (GlcNAc...) asparagine glycosylation is found at Asn7, Asn44, Asn89, Asn121, Asn138, Asn161, Asn169, Asn232, Asn361, Asn386, Asn393, Asn423, Asn447, Asn480, and Asn488. Residue Glu504 is part of the active site. 3 N-linked (GlcNAc...) asparagine glycosylation sites follow: Asn545, Asn548, and Asn614. Asp672 functions as the Proton donor in the catalytic mechanism. N-linked (GlcNAc...) asparagine glycosylation is found at Asn673, Asn814, Asn826, Asn835, Asn846, Asn910, Asn940, and Asn987.

This sequence belongs to the glycosyl hydrolase 31 family.

This is an uncharacterized protein from Schizosaccharomyces pombe (strain 972 / ATCC 24843) (Fission yeast).